A 263-amino-acid chain; its full sequence is Thiazole synthase (263 aa).

The active-site Schiff-base intermediate with DXP is the Lys102. 1-deoxy-D-xylulose 5-phosphate-binding positions include Gly164, 190 to 191, and 212 to 213; these read AG and NT.

Belongs to the ThiG family. Homotetramer. Forms heterodimers with either ThiH or ThiS.

The protein localises to the cytoplasm. It catalyses the reaction [ThiS sulfur-carrier protein]-C-terminal-Gly-aminoethanethioate + 2-iminoacetate + 1-deoxy-D-xylulose 5-phosphate = [ThiS sulfur-carrier protein]-C-terminal Gly-Gly + 2-[(2R,5Z)-2-carboxy-4-methylthiazol-5(2H)-ylidene]ethyl phosphate + 2 H2O + H(+). The protein operates within cofactor biosynthesis; thiamine diphosphate biosynthesis. In terms of biological role, catalyzes the rearrangement of 1-deoxy-D-xylulose 5-phosphate (DXP) to produce the thiazole phosphate moiety of thiamine. Sulfur is provided by the thiocarboxylate moiety of the carrier protein ThiS. In vitro, sulfur can be provided by H(2)S. The protein is Thiazole synthase of Helicobacter hepaticus (strain ATCC 51449 / 3B1).